The chain runs to 317 residues: Acetyl-coenzyme A carboxylase carboxyl transferase subunit alpha (317 aa).

In terms of domain architecture, CoA carboxyltransferase C-terminal spans 43 to 293 (RVRESMADIY…GDVISNALGE (251 aa)).

The protein belongs to the AccA family. As to quaternary structure, acetyl-CoA carboxylase is a heterohexamer composed of biotin carboxyl carrier protein (AccB), biotin carboxylase (AccC) and two subunits each of ACCase subunit alpha (AccA) and ACCase subunit beta (AccD).

The protein localises to the cytoplasm. It carries out the reaction N(6)-carboxybiotinyl-L-lysyl-[protein] + acetyl-CoA = N(6)-biotinyl-L-lysyl-[protein] + malonyl-CoA. It functions in the pathway lipid metabolism; malonyl-CoA biosynthesis; malonyl-CoA from acetyl-CoA: step 1/1. In terms of biological role, component of the acetyl coenzyme A carboxylase (ACC) complex. First, biotin carboxylase catalyzes the carboxylation of biotin on its carrier protein (BCCP) and then the CO(2) group is transferred by the carboxyltransferase to acetyl-CoA to form malonyl-CoA. The chain is Acetyl-coenzyme A carboxylase carboxyl transferase subunit alpha from Rhizobium rhizogenes (strain K84 / ATCC BAA-868) (Agrobacterium radiobacter).